The chain runs to 740 residues: Cell death abnormality protein 12 (740 aa).

The 147-residue stretch at 348 to 494 folds into the ELMO domain; the sequence is SEIQKVLDID…FVLEQLRHVL (147 aa). Residues 555–690 are required for punctate localization, cell corpse engulfment and distal cell tip migration; sequence INHLNYLKKG…ESLAYLVGNT (136 aa). The SH3-binding motif lies at 724 to 727; that stretch reads PDVP.

Interacts with psr-1. Forms a ternary complex with ced-2 and ced-5.

It localises to the cytoplasm. In terms of biological role, involved in apoptosis and necrosis. Required for the cell corpse engulfment process. Has roles in the formation of actin halos and distal tip cell migration. Plays no role in amphid axon outgrowth. In Caenorhabditis briggsae, this protein is Cell death abnormality protein 12.